The following is a 95-amino-acid chain: Aspartyl/glutamyl-tRNA(Asn/Gln) amidotransferase subunit C (95 aa).

Belongs to the GatC family. In terms of assembly, heterotrimer of A, B and C subunits.

The enzyme catalyses L-glutamyl-tRNA(Gln) + L-glutamine + ATP + H2O = L-glutaminyl-tRNA(Gln) + L-glutamate + ADP + phosphate + H(+). The catalysed reaction is L-aspartyl-tRNA(Asn) + L-glutamine + ATP + H2O = L-asparaginyl-tRNA(Asn) + L-glutamate + ADP + phosphate + 2 H(+). Its function is as follows. Allows the formation of correctly charged Asn-tRNA(Asn) or Gln-tRNA(Gln) through the transamidation of misacylated Asp-tRNA(Asn) or Glu-tRNA(Gln) in organisms which lack either or both of asparaginyl-tRNA or glutaminyl-tRNA synthetases. The reaction takes place in the presence of glutamine and ATP through an activated phospho-Asp-tRNA(Asn) or phospho-Glu-tRNA(Gln). This Pseudomonas fluorescens (strain SBW25) protein is Aspartyl/glutamyl-tRNA(Asn/Gln) amidotransferase subunit C.